Here is a 663-residue protein sequence, read N- to C-terminus: Alcohol oxidase (663 aa).

8-39 (DVIVCGGGSTGCVIAGRLANVDENLKVLLIEN) is a binding site for FAD. Histidine 567 functions as the Proton acceptor in the catalytic mechanism. Residues 661-663 (ARY) carry the Microbody targeting signal motif.

The protein belongs to the GMC oxidoreductase family. As to quaternary structure, homooctamer. It depends on FAD as a cofactor.

Its subcellular location is the peroxisome matrix. The catalysed reaction is a primary alcohol + O2 = an aldehyde + H2O2. It participates in energy metabolism; methane degradation. Catalyzes the oxidation of methanol to formaldehyde and hydrogen peroxide, the first step in the methanol utilization pathway of methylotrophic yeasts. This chain is Alcohol oxidase (AOD1), found in Candida boidinii (Yeast).